Consider the following 164-residue polypeptide: Endoribonuclease YbeY (164 aa).

Residues H117, H121, and H127 each contribute to the Zn(2+) site.

The protein belongs to the endoribonuclease YbeY family. Requires Zn(2+) as cofactor.

The protein localises to the cytoplasm. Functionally, single strand-specific metallo-endoribonuclease involved in late-stage 70S ribosome quality control and in maturation of the 3' terminus of the 16S rRNA. The protein is Endoribonuclease YbeY of Mycoplasma capricolum subsp. capricolum (strain California kid / ATCC 27343 / NCTC 10154).